Here is a 63-residue protein sequence, read N- to C-terminus: Large ribosomal subunit protein bL28 (63 aa).

This sequence belongs to the bacterial ribosomal protein bL28 family.

This Desulforudis audaxviator (strain MP104C) protein is Large ribosomal subunit protein bL28.